A 294-amino-acid chain; its full sequence is Picrinine-N-methytransferase TMT2 (294 aa).

Positions 75 to 84 (LLDVGCGLGG) are SAM motif I. Residues 137 to 143 (DGEFDVV) carry the Vacuolar targeting signal motif. Positions 138-146 (GEFDVVFTL) are SAM motif II. The tract at residues 165–174 (VGSPGAAIVV) is SAM motif III.

The protein belongs to the class I-like SAM-binding methyltransferase superfamily. gTMT family. In terms of assembly, homodimer.

It localises to the vacuole membrane. It carries out the reaction picrinine + S-adenosyl-L-methionine = ervincine + S-adenosyl-L-homocysteine + H(+). Its pathway is alkaloid biosynthesis; vindoline biosynthesis. Functionally, S-adenosyl-L-methionine-dependent N-methyltransferase involved in the biosynthesis of biologically active monoterpenoid indole alkaloids (MIAs) natural products including vindoline. Catalyzes the conversion of picrinine to N-methylpicrinine (ervincine). The sequence is that of Picrinine-N-methytransferase TMT2 from Catharanthus roseus (Madagascar periwinkle).